The following is a 231-amino-acid chain: MTTLDLTRAELALIVLYLNKAEARDKICRAIQYGSKFLSGGQPGTAQTVDKNTSLARKVFRLFKFVNDFHGLISPVPKGTPLPLVLLGKSKNALLSTFLFLDQIVWLGRSGIYKNKERTELLGRISLFCWLGSSVCTSAVEIGELGRLSSSMKKMEKELKADDELYRAKLQKSNDRTLALIKSSMDIIVAIGLLQLAPKTISPRVTGAFGFTTSLISCYQLLPSRPKLKTP.

Over Met1–Lys91 the chain is Cytoplasmic. The helical transmembrane segment at Asn92 to Gly108 threads the bilayer. At Arg109 to Ser202 the chain is on the lumenal side. The helical transmembrane segment at Pro203–Leu222 threads the bilayer. Topologically, residues Pro223–Pro231 are cytoplasmic.

Belongs to the peroxin-11 family. In terms of assembly, homooligomer. Interacts with ARC5 and FIS1B on peroxisomes. Expressed in leaves and developing siliques.

The protein resides in the peroxisome membrane. Functionally, involved in peroxisomal proliferation. Promotes peroxisomal duplication, aggregation or elongation without fission. In Arabidopsis thaliana (Mouse-ear cress), this protein is Peroxisomal membrane protein 11E (PEX11E).